A 153-amino-acid polypeptide reads, in one-letter code: Cytochrome c-type biogenesis protein CcmE (153 aa).

The Cytoplasmic segment spans residues 1 to 8; it reads MTPVQRRR. A helical; Signal-anchor for type II membrane protein transmembrane segment spans residues 9-29; it reads LVWVLLALLASGLATALVAMA. Residues 30–153 are Periplasmic-facing; that stretch reads LERNIAYLYT…DVPVTAPEVR (124 aa). The heme site is built by histidine 123 and tyrosine 127.

This sequence belongs to the CcmE/CycJ family.

The protein resides in the cell inner membrane. Its function is as follows. Heme chaperone required for the biogenesis of c-type cytochromes. Transiently binds heme delivered by CcmC and transfers the heme to apo-cytochromes in a process facilitated by CcmF and CcmH. The sequence is that of Cytochrome c-type biogenesis protein CcmE from Stenotrophomonas maltophilia (strain R551-3).